The following is a 234-amino-acid chain: UPF0502 protein Reut_B4455 (234 aa).

The protein belongs to the UPF0502 family.

This Cupriavidus pinatubonensis (strain JMP 134 / LMG 1197) (Cupriavidus necator (strain JMP 134)) protein is UPF0502 protein Reut_B4455.